The chain runs to 271 residues: Formamidopyrimidine-DNA glycosylase (271 aa).

P2 functions as the Schiff-base intermediate with DNA in the catalytic mechanism. The active-site Proton donor is the E3. The active-site Proton donor; for beta-elimination activity is the K58. DNA contacts are provided by R110 and R152. The segment at 237–271 (AVYGQTGKPCTVCGTPIARIRLGNRSTWFCPVCQK) adopts an FPG-type zinc-finger fold. R261 (proton donor; for delta-elimination activity) is an active-site residue.

This sequence belongs to the FPG family. As to quaternary structure, monomer. The cofactor is Zn(2+).

The enzyme catalyses Hydrolysis of DNA containing ring-opened 7-methylguanine residues, releasing 2,6-diamino-4-hydroxy-5-(N-methyl)formamidopyrimidine.. It catalyses the reaction 2'-deoxyribonucleotide-(2'-deoxyribose 5'-phosphate)-2'-deoxyribonucleotide-DNA = a 3'-end 2'-deoxyribonucleotide-(2,3-dehydro-2,3-deoxyribose 5'-phosphate)-DNA + a 5'-end 5'-phospho-2'-deoxyribonucleoside-DNA + H(+). In terms of biological role, involved in base excision repair of DNA damaged by oxidation or by mutagenic agents. Acts as a DNA glycosylase that recognizes and removes damaged bases. Has a preference for oxidized purines, such as 7,8-dihydro-8-oxoguanine (8-oxoG). Has AP (apurinic/apyrimidinic) lyase activity and introduces nicks in the DNA strand. Cleaves the DNA backbone by beta-delta elimination to generate a single-strand break at the site of the removed base with both 3'- and 5'-phosphates. The sequence is that of Formamidopyrimidine-DNA glycosylase from Geobacter sulfurreducens (strain ATCC 51573 / DSM 12127 / PCA).